The primary structure comprises 330 residues: L-tryptophan isonitrile synthase AmbI2 (330 aa).

This sequence belongs to the isocyanide synthase family.

The catalysed reaction is D-ribulose 5-phosphate + L-tryptophan = (2S)-3-(1H-indol-3-yl)-2-isocyanopropanoate + hydroxyacetone + formaldehyde + phosphate + H2O + H(+). In terms of biological role, involved in the biosynthesis of ambiguines, a family of hapalindole-type alkaloids. Responsible for the synthesis of the isonitrile group on tryptophan using ribulose 5-phosphate as the source of the carbon atom. The polypeptide is L-tryptophan isonitrile synthase AmbI2 (Fischerella ambigua (strain UTEX 1903)).